Reading from the N-terminus, the 300-residue chain is Probable endonuclease 4 (300 aa).

Residues H68, H109, E144, D178, H181, H213, D226, H228, and E258 each coordinate Zn(2+).

It belongs to the AP endonuclease 2 family. It depends on Zn(2+) as a cofactor.

The enzyme catalyses Endonucleolytic cleavage to 5'-phosphooligonucleotide end-products.. Its function is as follows. Endonuclease IV plays a role in DNA repair. It cleaves phosphodiester bonds at apurinic or apyrimidinic (AP) sites, generating a 3'-hydroxyl group and a 5'-terminal sugar phosphate. The protein is Probable endonuclease 4 of Latilactobacillus sakei subsp. sakei (strain 23K) (Lactobacillus sakei subsp. sakei).